Consider the following 342-residue polypeptide: MSELFKEMTKEERKIYYLKEWNVKKIPSFITKTLENREFGFDHTGEGPNDRKNVFHHIKDLEDYVKITAPYSIYSSVALYEEPKNMEGWLGAELVFDIDAKDLPLKRCNHETGKVCPICLDDAKELTKDTLLILREDFGFENIHLIYSGRGYHIRVLDDWALGLDSKAREKILSYISSAEEITFEDLQERKILLSSGYYRVFRLRFGYFIKRVSEYHLRNIGLNKRQIEQIIDGRDEIYENFVKKAMISAFSQGVGYKTLLRLFSLSTTFSKAYFDGRVTVDVKRILRVPSSLHSKVGLVATYIGNDEKDLEKFNPFKDAVPKFREKEVKEAYDLWKETMEE.

Active-site residues include Asp97, Asp99, and Asp276.

It belongs to the eukaryotic-type primase small subunit family. As to quaternary structure, heterodimer of a small subunit (PriS) and a large subunit (PriL). The cofactor is Mg(2+). Mn(2+) serves as cofactor.

Functionally, catalytic subunit of DNA primase, an RNA polymerase that catalyzes the synthesis of short RNA molecules used as primers for DNA polymerase during DNA replication. The small subunit contains the primase catalytic core and has DNA synthesis activity on its own. Binding to the large subunit stabilizes and modulates the activity, increasing the rate of DNA synthesis while decreasing the length of the DNA fragments, and conferring RNA synthesis capability. The DNA polymerase activity may enable DNA primase to also catalyze primer extension after primer synthesis. May also play a role in DNA repair. The chain is DNA primase small subunit PriS from Thermococcus sibiricus (strain DSM 12597 / MM 739).